The following is a 1321-amino-acid chain: Indole-3-acetaldehyde oxidase (1321 aa).

Positions 1–90 constitute a 2Fe-2S ferredoxin-type domain; sequence MSLVFAINGQ…HCNITTSEGL (90 aa). The [2Fe-2S] cluster site is built by Cys-42, Cys-47, and Cys-50. In terms of domain architecture, FAD-binding PCMH-type spans 215–404; the sequence is VDSGMYRWCS…LSIEIPFWHS (190 aa).

Belongs to the xanthine dehydrogenase family. In terms of assembly, aldehyde oxidases (AO) are homodimers and heterodimers of AO subunits. AO-beta is a AAO1-AAO2 heterodimer; AO-gamma is a AAO2 homodimer. AAO2 also forms a dimer with AAO3. [2Fe-2S] cluster is required as a cofactor. It depends on FAD as a cofactor. Requires Mo-molybdopterin as cofactor. Weakly expressed in roots, leaves and seedlings. In seedlings, mostly expressed in lower part of hypocotyls. Detectable in seeds and mature siliques at low levels.

It localises to the cytoplasm. It carries out the reaction indole-3-acetaldehyde + O2 + H2O = (indol-3-yl)acetate + H2O2 + H(+). Its activity is regulated as follows. Strongly inhibited by iodoacetate, potassium cyanide (KCN), 2-mercaptoethanol, dithiothreitol (DTT), p-chloromercuribenzoate, menadione and estradiol. Weakly inhibited by 4'-(9-acridinylamino)methanesulfon-m-anisidine (mAMSA) and tritonX-100. Not affected by allopurinol. In terms of biological role, in higher plant aldehyde oxidases (AO) appear to be homo- and heterodimeric assemblies of AO subunits with probably different physiological functions. In vitro, AO-gamma uses heptaldehyde, benzaldehyde, naphthaldehyde and cinnamaldehyde as substrates; AO-beta uses indole-3-acetaldehyde (IAAld), indole-3-aldehyde (IAld) and naphtaldehyde; the AAO2-AAO3 dimer uses abscisic aldehyde. This is Indole-3-acetaldehyde oxidase (AAO2) from Arabidopsis thaliana (Mouse-ear cress).